Here is a 191-residue protein sequence, read N- to C-terminus: Fe/S biogenesis protein NfuA (191 aa).

Positions 149 and 152 each coordinate [4Fe-4S] cluster.

This sequence belongs to the NfuA family. In terms of assembly, homodimer. [4Fe-4S] cluster serves as cofactor.

Involved in iron-sulfur cluster biogenesis. Binds a 4Fe-4S cluster, can transfer this cluster to apoproteins, and thereby intervenes in the maturation of Fe/S proteins. Could also act as a scaffold/chaperone for damaged Fe/S proteins. In Serratia proteamaculans (strain 568), this protein is Fe/S biogenesis protein NfuA.